Consider the following 299-residue polypeptide: Cycloserine biosynthesis protein DcsG (299 aa).

Positions 92, 137, 144, 175, 176, and 178 each coordinate ATP. Positions 95–298 (LADLAAHGVP…FAQALAERLK (204 aa)) constitute an ATP-grasp domain. Residues Arg-220 and Arg-254 contribute to the active site. Mg(2+) contacts are provided by Glu-269 and Glu-271. Residue Glu-271 is part of the active site.

As to quaternary structure, monomer. It depends on Mg(2+) as a cofactor.

It carries out the reaction O-ureido-D-serine + ATP + H2O + H(+) = D-cycloserine + NH4(+) + ADP + phosphate + CO2. Its function is as follows. Involved in the biosynthesis of the antibiotic D-cycloserine (DCS), a cyclic structural analog of D-alanine, used as an antitubercular agent. Catalyzes the synthesis of D-cycloserine from O-ureido-D-serine (D-OUS). It reacts with D-OUS, D-homocysteine and beta-aminooxy-D-alanine. The chain is Cycloserine biosynthesis protein DcsG from Streptomyces lavendulae.